The primary structure comprises 500 residues: MGCGLRKLEDPDESSPGKIFSTLKRPQVETKTEFAYEYALLDFTLQASTNPDVIKINSVLDIVAKVEDYYLKGYVVGAIHPVIQPVGQRKHLPASHLYRAVLSRLKLSPKHSAAGGQRRARLVMEECPLTCEAQANDAAKELMDKINAAAKRGMKFVGLVSQCYLPSMHCNGASHDGVAESGLHVRQDSQDNCKGWNEGALGGHLSESGVEEEPQHESGQHQTERNSSPSYANPKRGEAPDGKLYMVFNAFEEDAASWAYQEGVLSMKVTRKGAVISALDANWLELTTFYYKQGFSLIDSFVCWETPKGDQLPKSLEGFFIYEEEGSGVPGSNRRGNDAIVVEQWTVIEGCEIKTDYGPLLHTLAEFGWLLTSVLPTPILRHDSEGNLATKQVVFLQRPVTWNSAAQTPERKGSRLLKGEDRNKVSSRSLGLDTNASQAAGGRAPLEEGSLSPSRECWTKEERPAQSDSFSGFSSSDSVLRELDDGQFDQEEGVTQVTCM.

Gly-2 carries N-myristoyl glycine lipidation. Cys-3 carries S-palmitoyl cysteine lipidation. Residues 203–236 form a disordered region; it reads GHLSESGVEEEPQHESGQHQTERNSSPSYANPKR. Basic and acidic residues predominate over residues 213-224; sequence EPQHESGQHQTE. A Phosphoserine modification is found at Ser-404. Residues 406-500 are disordered; it reads AQTPERKGSR…EEGVTQVTCM (95 aa). Thr-408 carries the post-translational modification Phosphothreonine. Positions 409–424 are enriched in basic and acidic residues; that stretch reads PERKGSRLLKGEDRNK. The span at 426-438 shows a compositional bias: polar residues; that stretch reads SSRSLGLDTNASQ. Residue Ser-429 is modified to Phosphoserine. Over residues 467–478 the composition is skewed to low complexity; that stretch reads SDSFSGFSSSDS.

Belongs to the raftlin family. Expressed in B-cells, heart, brain, spleen, large intestine and lung. Expressed in dendritic cells and macrophages.

The protein localises to the cell membrane. In terms of biological role, upon bacterial lipopolysaccharide stimulation, mediates clathrin-dependent internalization of TLR4 in dendritic cells, resulting in activation of TICAM1-mediated signaling and subsequent IFNB1 production. May regulate B-cell antigen receptor-mediated signaling. The chain is Raftlin-2 (Rftn2) from Mus musculus (Mouse).